The following is a 731-amino-acid chain: Catalase-peroxidase (731 aa).

The tryptophyl-tyrosyl-methioninium (Trp-Tyr) (with M-254) cross-link spans 98–227 (WHAAGTYRTA…LAAIQMGLIY (130 aa)). The active-site Proton acceptor is the H99. Residues 227–254 (YVNPEGPQGNPHDDEGMARDMKETFKRM) constitute a cross-link (tryptophyl-tyrosyl-methioninium (Tyr-Met) (with W-98)). Residue H269 coordinates heme b.

It belongs to the peroxidase family. Peroxidase/catalase subfamily. Homodimer or homotetramer. Heme b serves as cofactor. Formation of the three residue Trp-Tyr-Met cross-link is important for the catalase, but not the peroxidase activity of the enzyme.

It catalyses the reaction H2O2 + AH2 = A + 2 H2O. It carries out the reaction 2 H2O2 = O2 + 2 H2O. Its function is as follows. Bifunctional enzyme with both catalase and broad-spectrum peroxidase activity. The protein is Catalase-peroxidase of Sphingopyxis alaskensis (strain DSM 13593 / LMG 18877 / RB2256) (Sphingomonas alaskensis).